Consider the following 107-residue polypeptide: MFRRGNNDEIKSTIRSIINPSGIIKYNVVYIPKYDAYRITLVSSTGNINASYIAEIISQLTAQGYAVMMKTPRSTLLRGGVVVLYAEKHHSNVGNDELPPPPLRKNW.

This is an uncharacterized protein from Acidianus sp. F28 (AFV-2).